The sequence spans 371 residues: Histidinol-phosphate aminotransferase (371 aa).

Position 227 is an N6-(pyridoxal phosphate)lysine (lysine 227).

The protein belongs to the class-II pyridoxal-phosphate-dependent aminotransferase family. Histidinol-phosphate aminotransferase subfamily. In terms of assembly, homodimer. Pyridoxal 5'-phosphate serves as cofactor.

The enzyme catalyses L-histidinol phosphate + 2-oxoglutarate = 3-(imidazol-4-yl)-2-oxopropyl phosphate + L-glutamate. Its pathway is amino-acid biosynthesis; L-histidine biosynthesis; L-histidine from 5-phospho-alpha-D-ribose 1-diphosphate: step 7/9. The sequence is that of Histidinol-phosphate aminotransferase from Sphingopyxis alaskensis (strain DSM 13593 / LMG 18877 / RB2256) (Sphingomonas alaskensis).